We begin with the raw amino-acid sequence, 78 residues long: COP9 signalosome complex subunit 5b (78 aa).

The protein belongs to the peptidase M67A family. CSN5 subfamily. Component of the CSN complex, probably composed of CSN1, CSN2, CSN3, CSN4, CSN5 (CSN5A or CSN5B), CSN6 (CSN6A or CSN6B), CSN7 and CSN8. A divalent metal cation is required as a cofactor.

The protein localises to the cytoplasm. It is found in the nucleus. Probable protease subunit of the COP9 signalosome complex (CSN), a complex involved in various cellular and developmental processes such as photomorphogenesis and auxin and jasmonate responses. The CSN complex is an essential regulator of the ubiquitin (Ubl) conjugation pathway by mediating the deneddylation of the cullin subunits of the SCF-type E3 ligase complexes, leading to decrease the Ubl ligase activity of SCF. In the complex, it probably acts as the catalytic center that mediates the cleavage of Nedd8 from cullins. It however has no metalloprotease activity by itself and requires the other subunits of the CSN complex. The CSN complex is involved in repression of photomorphogenesis in darkness by regulating the activity of COP1-containing Ubl ligase complexes. The protein is COP9 signalosome complex subunit 5b (CSN5B) of Brassica oleracea (Wild cabbage).